Consider the following 418-residue polypeptide: UDP-N-acetylglucosamine 1-carboxyvinyltransferase (418 aa).

Phosphoenolpyruvate is bound at residue 22–23 (KN). Arg92 provides a ligand contact to UDP-N-acetyl-alpha-D-glucosamine. Cys116 acts as the Proton donor in catalysis. The residue at position 116 (Cys116) is a 2-(S-cysteinyl)pyruvic acid O-phosphothioketal. UDP-N-acetyl-alpha-D-glucosamine-binding residues include Asp306 and Ile328.

This sequence belongs to the EPSP synthase family. MurA subfamily.

Its subcellular location is the cytoplasm. The enzyme catalyses phosphoenolpyruvate + UDP-N-acetyl-alpha-D-glucosamine = UDP-N-acetyl-3-O-(1-carboxyvinyl)-alpha-D-glucosamine + phosphate. The protein operates within cell wall biogenesis; peptidoglycan biosynthesis. Functionally, cell wall formation. Adds enolpyruvyl to UDP-N-acetylglucosamine. This chain is UDP-N-acetylglucosamine 1-carboxyvinyltransferase, found in Solibacter usitatus (strain Ellin6076).